Here is a 317-residue protein sequence, read N- to C-terminus: NADH-quinone oxidoreductase subunit H 1 (317 aa).

Transmembrane regions (helical) follow at residues 7–27 (IWVN…MLSW), 74–94 (AVFV…FAVV), 107–127 (IGVL…VLGG), 147–167 (LSYE…AGSF), 179–199 (LWFC…GIAE), 230–250 (FFIG…TLFF), 257–277 (VLPP…CFVL), and 297–317 (VMLP…LSVA).

This sequence belongs to the complex I subunit 1 family. In terms of assembly, NDH-1 is composed of 14 different subunits. Subunits NuoA, H, J, K, L, M, N constitute the membrane sector of the complex.

The protein resides in the cell inner membrane. It catalyses the reaction a quinone + NADH + 5 H(+)(in) = a quinol + NAD(+) + 4 H(+)(out). Its function is as follows. NDH-1 shuttles electrons from NADH, via FMN and iron-sulfur (Fe-S) centers, to quinones in the respiratory chain. The immediate electron acceptor for the enzyme in this species is believed to be ubiquinone. Couples the redox reaction to proton translocation (for every two electrons transferred, four hydrogen ions are translocated across the cytoplasmic membrane), and thus conserves the redox energy in a proton gradient. This subunit may bind ubiquinone. This chain is NADH-quinone oxidoreductase subunit H 1, found in Nitrosospira multiformis (strain ATCC 25196 / NCIMB 11849 / C 71).